The primary structure comprises 209 residues: Probable GTP-binding protein EngB (209 aa).

Residues 23-198 enclose the EngB-type G domain; the sequence is NGAEIAFAGR…EKVVAGWLVP (176 aa). GTP contacts are provided by residues 31–38, 58–62, 76–79, 143–146, and 177–179; these read GRSNAGKS, GRTQL, DLPG, TKSD, and FSS. Residues serine 38 and threonine 60 each contribute to the Mg(2+) site.

The protein belongs to the TRAFAC class TrmE-Era-EngA-EngB-Septin-like GTPase superfamily. EngB GTPase family. Requires Mg(2+) as cofactor.

Functionally, necessary for normal cell division and for the maintenance of normal septation. In Azoarcus sp. (strain BH72), this protein is Probable GTP-binding protein EngB.